The following is a 368-amino-acid chain: Histidinol-phosphate aminotransferase (368 aa).

An N6-(pyridoxal phosphate)lysine modification is found at Lys-224.

Belongs to the class-II pyridoxal-phosphate-dependent aminotransferase family. Histidinol-phosphate aminotransferase subfamily. Homodimer. It depends on pyridoxal 5'-phosphate as a cofactor.

It carries out the reaction L-histidinol phosphate + 2-oxoglutarate = 3-(imidazol-4-yl)-2-oxopropyl phosphate + L-glutamate. The protein operates within amino-acid biosynthesis; L-histidine biosynthesis; L-histidine from 5-phospho-alpha-D-ribose 1-diphosphate: step 7/9. This chain is Histidinol-phosphate aminotransferase, found in Agrobacterium fabrum (strain C58 / ATCC 33970) (Agrobacterium tumefaciens (strain C58)).